The following is a 496-amino-acid chain: Cruciferin BnC2 (496 aa).

Residues 1–23 (MARLSSLLYFSITVLIFLHGSTA) form the signal peptide. 2 cysteine pairs are disulfide-bonded: Cys-30–Cys-63 and Cys-106–Cys-313. 2 Cupin type-1 domains span residues 35 to 269 (LNAL…RTAQ) and 319 to 468 (DNLD…EEAR). A Phosphothreonine modification is found at Thr-109. The interval 114–170 (SVFQPGSGSPFGEGQGQGQQGQGQGQGQGQGKGQQGQGKGQQGQSQGQQGQGQGFRD) is disordered. The segment covering 122-154 (SPFGEGQGQGQQGQGQGQGQGQGKGQQGQGKGQ) has biased composition (gly residues). The residue at position 336 (Tyr-336) is a Phosphotyrosine. Ser-338 is modified (phosphoserine). Thr-432 is subject to Phosphothreonine.

This sequence belongs to the 11S seed storage protein (globulins) family. As to quaternary structure, hexamer; each subunit is composed of an acidic and a basic chain derived from a single precursor and linked by a disulfide bond.

This is a seed storage protein. This Brassica napus (Rape) protein is Cruciferin BnC2 (BnC2).